Here is a 227-residue protein sequence, read N- to C-terminus: UPF0758 protein lpl2409 (227 aa).

The MPN domain maps to 102-225 (RLSNTQQTYA…YSIFAENKWA (124 aa)). H173, H175, and D186 together coordinate Zn(2+). A JAMM motif motif is present at residues 173-186 (HNHPSGLSDASQQD).

Belongs to the UPF0758 family.

The protein is UPF0758 protein lpl2409 of Legionella pneumophila (strain Lens).